We begin with the raw amino-acid sequence, 221 residues long: UPF0502 protein CPS_0106 (221 aa).

Belongs to the UPF0502 family.

This Colwellia psychrerythraea (strain 34H / ATCC BAA-681) (Vibrio psychroerythus) protein is UPF0502 protein CPS_0106.